The following is a 928-amino-acid chain: Periplasmic nitrate reductase (928 aa).

A signal peptide (tat-type signal) is located at residues 1-33 (MAFSRREFLKSAAAASAASAVGMSVPSQLLAQA). Positions 40–96 (WRWDKSVCRFCGTGCGIMVATKNDQIVAVKGDPAAPVNRGLNCIKGYFNAKIMYGAD) constitute a 4Fe-4S Mo/W bis-MGD-type domain. Residues cysteine 47, cysteine 50, cysteine 54, and cysteine 82 each contribute to the [4Fe-4S] cluster site. Mo-bis(molybdopterin guanine dinucleotide)-binding positions include lysine 84, glutamine 152, asparagine 177, cysteine 181, 214 to 221 (WGANMAEM), 265 to 267 (QTD), methionine 422, glutamine 426, asparagine 532, 557 to 558 (SD), lysine 580, aspartate 607, and 818 to 827 (TGRVLEHWHS). Tryptophan 894 is a substrate binding site. Positions 902 and 919 each coordinate Mo-bis(molybdopterin guanine dinucleotide).

The protein belongs to the prokaryotic molybdopterin-containing oxidoreductase family. NasA/NapA/NarB subfamily. As to quaternary structure, component of the periplasmic nitrate reductase NapAB complex composed of NapA and NapB. It depends on [4Fe-4S] cluster as a cofactor. Requires Mo-bis(molybdopterin guanine dinucleotide) as cofactor. Predicted to be exported by the Tat system. The position of the signal peptide cleavage has not been experimentally proven.

It is found in the periplasm. The enzyme catalyses 2 Fe(II)-[cytochrome] + nitrate + 2 H(+) = 2 Fe(III)-[cytochrome] + nitrite + H2O. Functionally, catalytic subunit of the periplasmic nitrate reductase complex NapAB. Receives electrons from NapB and catalyzes the reduction of nitrate to nitrite. This Wolinella succinogenes (strain ATCC 29543 / DSM 1740 / CCUG 13145 / JCM 31913 / LMG 7466 / NCTC 11488 / FDC 602W) (Vibrio succinogenes) protein is Periplasmic nitrate reductase.